The following is a 259-amino-acid chain: 3-deoxy-manno-octulosonate cytidylyltransferase (259 aa).

It belongs to the KdsB family.

It is found in the cytoplasm. It carries out the reaction 3-deoxy-alpha-D-manno-oct-2-ulosonate + CTP = CMP-3-deoxy-beta-D-manno-octulosonate + diphosphate. Its pathway is nucleotide-sugar biosynthesis; CMP-3-deoxy-D-manno-octulosonate biosynthesis; CMP-3-deoxy-D-manno-octulosonate from 3-deoxy-D-manno-octulosonate and CTP: step 1/1. It participates in bacterial outer membrane biogenesis; lipopolysaccharide biosynthesis. In terms of biological role, activates KDO (a required 8-carbon sugar) for incorporation into bacterial lipopolysaccharide in Gram-negative bacteria. This Actinobacillus succinogenes (strain ATCC 55618 / DSM 22257 / CCUG 43843 / 130Z) protein is 3-deoxy-manno-octulosonate cytidylyltransferase.